The sequence spans 72 residues: Putative snRNP Sm-like protein (72 aa).

The 69-residue stretch at 4–72 (RPLDILNNAL…RGDNVVYVSP (69 aa)) folds into the Sm domain.

This sequence belongs to the snRNP Sm proteins family.

The polypeptide is Putative snRNP Sm-like protein (Methanosarcina barkeri (strain Fusaro / DSM 804)).